The sequence spans 105 residues: Met repressor (105 aa).

Belongs to the MetJ family. Homodimer.

The protein localises to the cytoplasm. This regulatory protein, when combined with SAM (S-adenosylmethionine) represses the expression of the methionine regulon and of enzymes involved in SAM synthesis. The protein is Met repressor of Haemophilus influenzae (strain 86-028NP).